Reading from the N-terminus, the 2209-residue chain is Genome polyprotein (2209 aa).

Gly2 carries the N-myristoyl glycine; by host lipid modification. The Cytoplasmic portion of the chain corresponds to 2–1520 (GAQVSSQKVG…NINRAMTILQ (1519 aa)). Positions 580 to 600 (GLGQMLESMIDNTVRETVGAA) are amphipathic alpha-helix. The interval 599–619 (AATSRDALPNTEASGPTHSKE) is disordered. Residues His901 and Asp919 each act as for protease 2A activity in the active site. Residues Cys936 and Cys938 each coordinate Zn(2+). Residue Cys990 is the For protease 2A activity of the active site. Residues Cys996 and His998 each coordinate Zn(2+). A membrane-binding region spans residues 1128–1200 (GDSWLKKFTE…HQSCPSQEHQ (73 aa)). The interval 1128-1266 (GDSWLKKFTE…SPGTGKSVAT (139 aa)) is oligomerization. The interval 1149 to 1153 (SNKIS) is RNA-binding. In terms of domain architecture, SF3 helicase spans 1232–1388 (EHTINNYIQF…NEYSRDGKLN (157 aa)). Residue 1256 to 1263 (GSPGTGKS) participates in ATP binding. 4 residues coordinate Zn(2+): Cys1396, Cys1399, Cys1408, and Cys1413. The C4-type zinc-finger motif lies at 1396–1413 (CKNCHQPANFKRCCPLVC). Positions 1440–1447 (ERNRRSNI) are RNA-binding. The oligomerization stretch occupies residues 1451 to 1456 (MEALFQ). Residues 1521–1536 (AVTTFAAVAGVVYVMY) lie within the membrane without spanning it. The Cytoplasmic segment spans residues 1537-2209 (KLFAGHQGAY…TLYRRWLDSF (673 aa)). Residue Tyr1546 is modified to O-(5'-phospho-RNA)-tyrosine. At Tyr1546 the chain carries O-UMP-tyrosine; transient. In terms of domain architecture, Peptidase C3 spans 1566-1744 (GPGFDYAVAM…FAAALKRSYF (179 aa)). Active-site for protease 3C activity residues include His1605, Glu1636, and Cys1712. A RdRp catalytic domain is found at 1975 to 2090 (EKLFAFDYTG…SYPHEVDASL (116 aa)). Mg(2+)-binding residues include Asp1981 and Asp2076.

Belongs to the picornaviruses polyprotein family. In terms of assembly, interacts with capsid protein VP1 and capsid protein VP3 to form heterotrimeric protomers. Interacts with capsid protein VP0, and capsid protein VP3 to form heterotrimeric protomers. Five protomers subsequently associate to form pentamers which serve as building blocks for the capsid. Interacts with capsid protein VP2, capsid protein VP3 and capsid protein VP4 following cleavage of capsid protein VP0. Interacts with human PVR. As to quaternary structure, interacts with capsid protein VP1 and capsid protein VP3 in the mature capsid. In terms of assembly, interacts with capsid protein VP0 and capsid protein VP1 to form heterotrimeric protomers. Five protomers subsequently associate to form pentamers which serve as building blocks for the capsid. Interacts with capsid protein VP4 in the mature capsid. Interacts with protein 2C; this interaction may be important for virion morphogenesis. Interacts with capsid protein VP1 and capsid protein VP3. As to quaternary structure, homodimer. In terms of assembly, homohexamer; forms a hexameric ring structure with 6-fold symmetry characteristic of AAA+ ATPases. Interacts (via N-terminus) with host RTN3 (via reticulon domain); this interaction is important for viral replication. Interacts with capsid protein VP3; this interaction may be important for virion morphogenesis. Interacts with protein 3CD. As to quaternary structure, homodimer. Interacts with host GBF1. Interacts (via GOLD domain) with host ACBD3 (via GOLD domain); this interaction allows the formation of a viral protein 3A/ACBD3 heterotetramer with a 2:2 stoichiometry, which will stimulate the recruitment of host PI4KB in order to synthesize PI4P at the viral RNA replication sites. In terms of assembly, interacts with RNA-directed RNA polymerase. Interacts with protein 3AB and with RNA-directed RNA polymerase. As to quaternary structure, interacts with Viral protein genome-linked and with protein 3CD. The cofactor is Mg(2+). Specific enzymatic cleavages in vivo by the viral proteases yield processing intermediates and the mature proteins. Post-translationally, myristoylation is required for the formation of pentamers during virus assembly. Further assembly of 12 pentamers and a molecule of genomic RNA generates the provirion. In terms of processing, during virion maturation, immature virions are rendered infectious following cleavage of VP0 into VP4 and VP2. This maturation seems to be an autocatalytic event triggered by the presence of RNA in the capsid and it is followed by a conformational change infectious virion. Myristoylation is required during RNA encapsidation and formation of the mature virus particle. Post-translationally, VPg is uridylylated by the polymerase into VPg-pUpU. This acts as a nucleotide-peptide primer for the genomic RNA replication.

It is found in the virion. It localises to the host cytoplasm. The protein resides in the host cytoplasmic vesicle membrane. The protein localises to the host nucleus. It carries out the reaction RNA(n) + a ribonucleoside 5'-triphosphate = RNA(n+1) + diphosphate. The catalysed reaction is Selective cleavage of Tyr-|-Gly bond in the picornavirus polyprotein.. The enzyme catalyses a ribonucleoside 5'-triphosphate + H2O = a ribonucleoside 5'-diphosphate + phosphate + H(+). It catalyses the reaction Selective cleavage of Gln-|-Gly bond in the poliovirus polyprotein. In other picornavirus reactions Glu may be substituted for Gln, and Ser or Thr for Gly.. Its activity is regulated as follows. Replication or transcription is subject to high level of random mutations by the nucleotide analog ribavirin. Forms an icosahedral capsid of pseudo T=3 symmetry with capsid proteins VP2 and VP3. The capsid is 300 Angstroms in diameter, composed of 60 copies of each capsid protein and enclosing the viral positive strand RNA genome. Capsid protein VP1 mainly forms the vertices of the capsid. Capsid protein VP1 interacts with host cell receptor PVR to provide virion attachment to target host epithelial cells. This attachment induces virion internalization predominantly through clathrin- and caveolin-independent endocytosis in Hela cells and through caveolin-mediated endocytosis in brain microvascular endothelial cells. Tyrosine kinases are probably involved in the entry process. Virus binding to PVR induces increased junctional permeability and rearrangement of junctional proteins. Modulation of endothelial tight junctions, as well as cytolytic infection of endothelial cells themselves, may result in loss of endothelial integrity which may help the virus to reach the CNS. After binding to its receptor, the capsid undergoes conformational changes. Capsid protein VP1 N-terminus (that contains an amphipathic alpha-helix) and capsid protein VP4 are externalized. Together, they shape a pore in the host membrane through which viral genome is translocated to host cell cytoplasm. Functionally, forms an icosahedral capsid of pseudo T=3 symmetry with capsid proteins VP1 and VP3. The capsid is 300 Angstroms in diameter, composed of 60 copies of each capsid protein and enclosing the viral positive strand RNA genome. In terms of biological role, forms an icosahedral capsid of pseudo T=3 symmetry with capsid proteins VP2 and VP1. The capsid is 300 Angstroms in diameter, composed of 60 copies of each capsid protein and enclosing the viral positive strand RNA genome. Its function is as follows. Lies on the inner surface of the capsid shell. After binding to the host receptor, the capsid undergoes conformational changes. Capsid protein VP4 is released, Capsid protein VP1 N-terminus is externalized, and together, they shape a pore in the host membrane through which the viral genome is translocated into the host cell cytoplasm. Component of immature procapsids, which is cleaved into capsid proteins VP4 and VP2 after maturation. Allows the capsid to remain inactive before the maturation step. Functionally, cysteine protease that cleaves viral polyprotein and specific host proteins. It is responsible for the autocatalytic cleavage between the P1 and P2 regions, which is the first cleavage occurring in the polyprotein. Also cleaves the host translation initiation factor EIF4G1, in order to shut down the capped cellular mRNA translation. Inhibits the host nucleus-cytoplasm protein and RNA trafficking by cleaving host members of the nuclear pores including NUP98, NUP62 and NUP153. Counteracts stress granule formation probably by antagonizing its assembly or promoting its dissassembly. Cleaves and inhibits host IFIH1/MDA5, thereby inhibiting the type-I IFN production and the establishment of the antiviral state. Cleaves and inhibits host MAVS, thereby inhibiting the type-I IFN production and the establishment of the antiviral state. In terms of biological role, plays an essential role in the virus replication cycle by acting as a viroporin. Creates a pore in the host endoplasmic reticulum and as a consequence releases Ca2+ in the cytoplasm of infected cell. In turn, high levels of cytoplasmic calcium may trigger membrane trafficking and transport of viral ER-associated proteins to viroplasms, sites of viral genome replication. Its function is as follows. Induces and associates with structural rearrangements of intracellular membranes. Displays RNA-binding, nucleotide binding and NTPase activities. May play a role in virion morphogenesis and viral RNA encapsidation by interacting with the capsid protein VP3. Localizes the viral replication complex to the surface of membranous vesicles. Together with protein 3CD binds the Cis-Active RNA Element (CRE) which is involved in RNA synthesis initiation. Acts as a cofactor to stimulate the activity of 3D polymerase, maybe through a nucleid acid chaperone activity. Functionally, localizes the viral replication complex to the surface of membranous vesicles. It inhibits host cell endoplasmic reticulum-to-Golgi apparatus transport and causes the disassembly of the Golgi complex, possibly through GBF1 interaction. This would result in depletion of MHC, trail receptors and IFN receptors at the host cell surface. Plays an essential role in viral RNA replication by recruiting ACBD3 and PI4KB at the viral replication sites, thereby allowing the formation of the rearranged membranous structures where viral replication takes place. In terms of biological role, acts as a primer for viral RNA replication and remains covalently bound to viral genomic RNA. VPg is uridylylated prior to priming replication into VPg-pUpU. The oriI viral genomic sequence may act as a template for this. The VPg-pUpU is then used as primer on the genomic RNA poly(A) by the RNA-dependent RNA polymerase to replicate the viral genome. During genome replication, the VPg-RNA linkage is removed by the host TDP2, thereby accelerating replication. During the late stage of the replication cycle, host TDP2 is excluded from sites of viral RNA synthesis and encapsidation, allowing for the generation of progeny virions. Its function is as follows. Involved in the viral replication complex and viral polypeptide maturation. It exhibits protease activity with a specificity and catalytic efficiency that is different from protease 3C. Protein 3CD binds to the 5'UTR of the viral genome. Major viral protease that mediates proteolytic processing of the polyprotein. Cleaves host EIF5B, contributing to host translation shutoff. Cleaves also host PABPC1, contributing to host translation shutoff. Cleaves host RIGI and thus contributes to the inhibition of type I interferon production. Cleaves host NLRP1, triggers host N-glycine-mediated degradation of the autoinhibitory NLRP1 N-terminal fragment. Inhibits the integrated stress response (ISR) in the infected cell by cleaving host G3BP1. Stress granule formation is thus inhibited, which allows protein synthesis and viral replication. Functionally, replicates the viral genomic RNA on the surface of intracellular membranes. May form linear arrays of subunits that propagate along a strong head-to-tail interaction called interface-I. Covalently attaches UMP to a tyrosine of VPg, which is used to prime RNA synthesis. The positive stranded RNA genome is first replicated at virus induced membranous vesicles, creating a dsRNA genomic replication form. This dsRNA is then used as template to synthesize positive stranded RNA genomes. ss(+)RNA genomes are either translated, replicated or encapsidated. In Homo sapiens (Human), this protein is Genome polyprotein.